Reading from the N-terminus, the 345-residue chain is Phenylalanine--tRNA ligase alpha subunit (345 aa).

E259 serves as a coordination point for Mg(2+).

The protein belongs to the class-II aminoacyl-tRNA synthetase family. Phe-tRNA synthetase alpha subunit type 1 subfamily. In terms of assembly, tetramer of two alpha and two beta subunits. It depends on Mg(2+) as a cofactor.

It localises to the cytoplasm. The catalysed reaction is tRNA(Phe) + L-phenylalanine + ATP = L-phenylalanyl-tRNA(Phe) + AMP + diphosphate + H(+). In Lactococcus lactis subsp. cremoris (strain SK11), this protein is Phenylalanine--tRNA ligase alpha subunit.